We begin with the raw amino-acid sequence, 208 residues long: N-(5'-phosphoribosyl)anthranilate isomerase (208 aa).

This sequence belongs to the TrpF family.

It catalyses the reaction N-(5-phospho-beta-D-ribosyl)anthranilate = 1-(2-carboxyphenylamino)-1-deoxy-D-ribulose 5-phosphate. The protein operates within amino-acid biosynthesis; L-tryptophan biosynthesis; L-tryptophan from chorismate: step 3/5. The sequence is that of N-(5'-phosphoribosyl)anthranilate isomerase from Dechloromonas aromatica (strain RCB).